A 221-amino-acid chain; its full sequence is Toll/interleukin-1 receptor domain-containing adapter protein (221 aa).

A disordered region spans residues 1-82; it reads MASSTSLPAP…HASDSGSSRW (82 aa). Low complexity predominate over residues 48 to 67; sequence SQPTSQDSPLPPSLSSVTSP. Residues 84–213 enclose the TIR domain; sequence KDYDVCVCHS…GGFRQVKEAV (130 aa). Intrachain disulfides connect C89–C134 and C142–C174.

Homodimer. Also forms heterodimers with MYD88. May interact with PIK3AP1. Interacts with TLR4 and IRAK2 via their respective TIR domains. Interacts with BMX and TBK1. Interacts with EIF2AK2. Does not interact with IRAK1, nor TLR9. Interacts with TLR2. Interacts with RAGE/AGER. As to quaternary structure, (Microbial infection) In case of infection, interacts with B.melitensis protein TcpB (AC Q8YF53); TcpB abolishes the TLR4-TIRAP interaction and downstream signaling. Post-translationally, phosphorylated by IRAK1 and IRAK4. Also phosphorylated by BTK. In terms of processing, polyubiquitinated. Polyubiquitination follows phosphorylation by BTK and leads to TIRAP degradation. Highly expressed in liver, kidney, spleen, skeletal muscle and heart. Also detected in peripheral blood leukocytes, lung, placenta, small intestine, thymus, colon and brain.

It is found in the cytoplasm. The protein resides in the cell membrane. It localises to the membrane. In terms of biological role, adapter involved in TLR2, TLR4 and RAGE signaling pathways in the innate immune response. Acts via IRAK2 and TRAF-6, leading to the activation of NF-kappa-B, MAPK1, MAPK3 and JNK, and resulting in cytokine secretion and the inflammatory response. Positively regulates the production of TNF-alpha (TNF) and interleukin-6 (IL6). This Homo sapiens (Human) protein is Toll/interleukin-1 receptor domain-containing adapter protein (TIRAP).